A 398-amino-acid chain; its full sequence is Succinyl-diaminopimelate desuccinylase (398 aa).

His68 provides a ligand contact to Zn(2+). Asp70 is an active-site residue. Asp101 contributes to the Zn(2+) binding site. Glu135 serves as the catalytic Proton acceptor. The Zn(2+) site is built by Glu136, Glu164, and His349.

It belongs to the peptidase M20A family. DapE subfamily. As to quaternary structure, homodimer. Requires Zn(2+) as cofactor. The cofactor is Co(2+).

It carries out the reaction N-succinyl-(2S,6S)-2,6-diaminopimelate + H2O = (2S,6S)-2,6-diaminopimelate + succinate. The protein operates within amino-acid biosynthesis; L-lysine biosynthesis via DAP pathway; LL-2,6-diaminopimelate from (S)-tetrahydrodipicolinate (succinylase route): step 3/3. Its function is as follows. Catalyzes the hydrolysis of N-succinyl-L,L-diaminopimelic acid (SDAP), forming succinate and LL-2,6-diaminopimelate (DAP), an intermediate involved in the bacterial biosynthesis of lysine and meso-diaminopimelic acid, an essential component of bacterial cell walls. This chain is Succinyl-diaminopimelate desuccinylase, found in Wolbachia pipientis wMel.